Consider the following 766-residue polypeptide: Deoxynucleotidyltransferase terminal-interacting protein 2 (766 aa).

The segment at 1–99 is disordered; sequence MVVTRSARPQ…DCSSVPEVQD (99 aa). Composition is skewed to polar residues over residues 13-28 and 42-56; these read NEAT…NSAV and SPDN…TTPE. Thr127 carries the post-translational modification Phosphothreonine. Residues Ser139, Ser143, and Ser146 each carry the phosphoserine modification. The segment at 155–175 is disordered; the sequence is TEITTRRSKAKSQREPKQESH. Residues 166–175 are compositionally biased toward basic and acidic residues; sequence SQREPKQESH. Ser180 and Ser190 each carry phosphoserine. Residue Lys217 forms a Glycyl lysine isopeptide (Lys-Gly) (interchain with G-Cter in SUMO2) linkage. Thr229 carries the phosphothreonine modification. Residues Ser236, Ser248, and Ser250 each carry the phosphoserine modification. Residue Lys254 forms a Glycyl lysine isopeptide (Lys-Gly) (interchain with G-Cter in SUMO2) linkage. Ser258 is modified (phosphoserine). Lys327 participates in a covalent cross-link: Glycyl lysine isopeptide (Lys-Gly) (interchain with G-Cter in SUMO2). Position 334 is a phosphoserine (Ser334). 3 disordered regions span residues 345–367, 390–450, and 520–557; these read VSQR…LNHE, KNAI…KDDS, and KAGE…DEDN. Lys394 is covalently cross-linked (Glycyl lysine isopeptide (Lys-Gly) (interchain with G-Cter in SUMO2)). Residues 421–434 show a composition bias toward basic and acidic residues; sequence DMSKEKEVDSESDT. Residues 435–444 are compositionally biased toward polar residues; it reads KPSNLEFNTT. Residues 515–552 are a coiled coil; that stretch reads LDEEDKAGEVATEEEEEEEEEESEEELSDHDRNKDNEF. Residues 520–542 are compositionally biased toward acidic residues; the sequence is KAGEVATEEEEEEEEEESEEELS. The segment at 558-615 is tdBR region; mediates interaction with DNTT; the sequence is LLSNTKSKLLKLMSSSIDTGLNIKELGGLYINFNADKVQLNKRTLTQMKEKRKDELLQ. Residues Lys568, Lys594, and Lys616 each participate in a glycyl lysine isopeptide (Lys-Gly) (interchain with G-Cter in SUMO2) cross-link. Thr620 carries the phosphothreonine modification. Residues Lys636, Lys659, Lys668, Lys696, and Lys741 each participate in a glycyl lysine isopeptide (Lys-Gly) (interchain with G-Cter in SUMO2) cross-link.

As to quaternary structure, forms a ternary complex with DNTT and core histone; interaction with PCNA releases DNTT and H2A/H2B histones from this ternary complex. Interacts with ESR1, ESR2, PPARG and RXRA. Part of the small subunit (SSU) processome, composed of more than 70 proteins and the RNA chaperone small nucleolar RNA (snoRNA) U3.

It is found in the nucleus. Its subcellular location is the nucleolus. In terms of biological role, regulates the transcriptional activity of DNTT and ESR1. May function as a chromatin remodeling protein. Part of the small subunit (SSU) processome, first precursor of the small eukaryotic ribosomal subunit. During the assembly of the SSU processome in the nucleolus, many ribosome biogenesis factors, an RNA chaperone and ribosomal proteins associate with the nascent pre-rRNA and work in concert to generate RNA folding, modifications, rearrangements and cleavage as well as targeted degradation of pre-ribosomal RNA by the RNA exosome. The polypeptide is Deoxynucleotidyltransferase terminal-interacting protein 2 (DNTTIP2) (Bos taurus (Bovine)).